Here is a 520-residue protein sequence, read N- to C-terminus: Arabinose import ATP-binding protein AraG (520 aa).

Residues 1–10 (MTTQTMTAVS) show a composition bias toward polar residues. Residues 1 to 27 (MTTQTMTAVSGNDGDTGGDAAESPPGG) form a disordered region. 2 consecutive ABC transporter domains span residues 30 to 265 (LALD…MVGR) and 265 to 516 (RSIE…LIKL). Residue 62-69 (GENGAGKS) participates in ATP binding.

The protein belongs to the ABC transporter superfamily. Arabinose importer (TC 3.A.1.2.2) family. As to quaternary structure, the complex is composed of two ATP-binding proteins (AraG), two transmembrane proteins (AraH) and a solute-binding protein (AraF).

Its subcellular location is the cell inner membrane. The catalysed reaction is L-arabinose(out) + ATP + H2O = L-arabinose(in) + ADP + phosphate + H(+). Part of the ABC transporter complex AraFGH involved in L-arabinose import. Responsible for energy coupling to the transport system. The chain is Arabinose import ATP-binding protein AraG from Azospirillum brasilense.